A 385-amino-acid chain; its full sequence is Acyl-CoA dehydrogenase IpdE1 (385 aa).

FAD contacts are provided by residues glutamine 126–serine 129 and serine 161. Glutamate 244 (proton acceptor) is an active-site residue. Serine 364–glutamate 366 is a binding site for FAD.

Belongs to the acyl-CoA dehydrogenase family. Heterotetramer composed of 2 IpdE1 subunits and 2 IpdE2 subunits. FAD serves as cofactor.

It carries out the reaction 3-[(3aS,4S,5R,7aS)-5-hydroxy-7a-methyl-1-oxo-octahydro-1H-inden-4-yl]propanoyl-CoA + A = (2E)-3-[(3aS,4S,5R,7aS)-5-hydroxy-7a-methyl-1-oxo-octahydro-1H-inden-4-yl]prop-2-enoyl-CoA + AH2. It functions in the pathway steroid metabolism; cholesterol degradation. Functionally, involved in cholesterol degradation. Catalyzes the dehydrogenation of 5OH-HIP-CoA to 5OH-HIPE-CoA. Can also use octanoyl-CoA and dihydroferuloyl-CoA, with lower efficiency. Cannot use 3-oxo-4-pregnene-20-carboxyl-CoA (3-OPC-CoA). The chain is Acyl-CoA dehydrogenase IpdE1 from Mycobacterium tuberculosis (strain ATCC 25618 / H37Rv).